We begin with the raw amino-acid sequence, 326 residues long: MKENFWSTLPRPFFILAPMEDVTNIVFRHVVSEAARPDVFFTEFTNTESYCHPEGIHSVRGRLTFSDDEQPMVAHIWGDKPEQFREMSIGLADMGFKGIDLNMGCPVANVAKKGKGSGLILRPETAAEIIQASKAGGLPVSVKTRLGYYDIDEWRDWLKHVFEQDIANLSIHLRTRKEMSKVDAHWELIEAIKTLRDEIAPNTLLTINGDIPDRQTGLELANKYGIDGIMIGRGIFHNPFAFEKEPREHSSKELLGLLRLHLSLFEKYDKDEARHFKSLRRFFKIYVRGIRGASELRHQLMNTQSIAEARELLDTFEARMDARSEV.

An FMN-binding site is contributed by 18-20; the sequence is PME. Residue Cys105 is the Proton donor of the active site. Residues Lys143, 208 to 210, and 232 to 233 each bind FMN; these read NGD and GR.

Belongs to the Dus family. The cofactor is FMN.

The enzyme catalyses a 5,6-dihydrouridine in tRNA + NAD(+) = a uridine in tRNA + NADH + H(+). It catalyses the reaction a 5,6-dihydrouridine in tRNA + NADP(+) = a uridine in tRNA + NADPH + H(+). Functionally, catalyzes the synthesis of 5,6-dihydrouridine (D), a modified base found in the D-loop of most tRNAs, via the reduction of the C5-C6 double bond in target uridines. The chain is Probable tRNA-dihydrouridine synthase (dus) from Staphylococcus epidermidis (strain ATCC 12228 / FDA PCI 1200).